Reading from the N-terminus, the 77-residue chain is Large ribosomal subunit protein bL28 (77 aa).

The protein belongs to the bacterial ribosomal protein bL28 family.

The chain is Large ribosomal subunit protein bL28 from Delftia acidovorans (strain DSM 14801 / SPH-1).